Reading from the N-terminus, the 312-residue chain is Protein-methionine-sulfoxide reductase catalytic subunit MsrP (312 aa).

Residues 1–42 constitute a signal peptide (tat-type signal); that stretch reads MALFRYPRPLPSEITPRDMYLSRRSLIGGAAALGAVSATADA. Mo-molybdopterin is bound by residues Asn-68, 71–72, Cys-126, Ser-161, Asn-211, Arg-216, and 227–229; these read YE and GIK.

It belongs to the MsrP family. Heterodimer of a catalytic subunit (MsrP) and a heme-binding subunit (MsrQ). Requires Mo-molybdopterin as cofactor. Predicted to be exported by the Tat system. The position of the signal peptide cleavage has not been experimentally proven.

The protein localises to the periplasm. It catalyses the reaction L-methionyl-[protein] + a quinone + H2O = L-methionyl-(S)-S-oxide-[protein] + a quinol. It carries out the reaction L-methionyl-[protein] + a quinone + H2O = L-methionyl-(R)-S-oxide-[protein] + a quinol. In terms of biological role, part of the MsrPQ system that repairs oxidized periplasmic proteins containing methionine sulfoxide residues (Met-O), using respiratory chain electrons. Thus protects these proteins from oxidative-stress damage caused by reactive species of oxygen and chlorine generated by the host defense mechanisms. MsrPQ is essential for the maintenance of envelope integrity under bleach stress, rescuing a wide series of structurally unrelated periplasmic proteins from methionine oxidation. The catalytic subunit MsrP is non-stereospecific, being able to reduce both (R-) and (S-) diastereoisomers of methionine sulfoxide. This is Protein-methionine-sulfoxide reductase catalytic subunit MsrP from Gluconobacter oxydans (strain 621H) (Gluconobacter suboxydans).